The primary structure comprises 142 residues: Large ribosomal subunit protein uL13 (142 aa).

This sequence belongs to the universal ribosomal protein uL13 family. Part of the 50S ribosomal subunit.

Functionally, this protein is one of the early assembly proteins of the 50S ribosomal subunit, although it is not seen to bind rRNA by itself. It is important during the early stages of 50S assembly. The protein is Large ribosomal subunit protein uL13 of Ruthia magnifica subsp. Calyptogena magnifica.